Consider the following 872-residue polypeptide: Alanine--tRNA ligase (872 aa).

Zn(2+) contacts are provided by histidine 567, histidine 571, cysteine 669, and histidine 673.

This sequence belongs to the class-II aminoacyl-tRNA synthetase family. It depends on Zn(2+) as a cofactor.

It localises to the cytoplasm. The enzyme catalyses tRNA(Ala) + L-alanine + ATP = L-alanyl-tRNA(Ala) + AMP + diphosphate. Its function is as follows. Catalyzes the attachment of alanine to tRNA(Ala) in a two-step reaction: alanine is first activated by ATP to form Ala-AMP and then transferred to the acceptor end of tRNA(Ala). Also edits incorrectly charged Ser-tRNA(Ala) and Gly-tRNA(Ala) via its editing domain. This is Alanine--tRNA ligase from Streptococcus pyogenes serotype M18 (strain MGAS8232).